Reading from the N-terminus, the 378-residue chain is Dihydroorotate dehydrogenase (quinone) (378 aa).

FMN-binding positions include 77 to 81 (AGFDK) and Thr101. Lys81 contacts substrate. A substrate-binding site is contributed by 126–130 (NRMGF). Asn158 and Asn191 together coordinate FMN. Asn191 provides a ligand contact to substrate. Ser194 acts as the Nucleophile in catalysis. Asn196 is a binding site for substrate. Positions 229 and 257 each coordinate FMN. A substrate-binding site is contributed by 258 to 259 (NT). FMN is bound by residues Gly287, Gly316, and 337–338 (YT).

This sequence belongs to the dihydroorotate dehydrogenase family. Type 2 subfamily. In terms of assembly, monomer. FMN serves as cofactor.

It is found in the cell membrane. It carries out the reaction (S)-dihydroorotate + a quinone = orotate + a quinol. The protein operates within pyrimidine metabolism; UMP biosynthesis via de novo pathway; orotate from (S)-dihydroorotate (quinone route): step 1/1. In terms of biological role, catalyzes the conversion of dihydroorotate to orotate with quinone as electron acceptor. The chain is Dihydroorotate dehydrogenase (quinone) from Synechococcus elongatus (strain ATCC 33912 / PCC 7942 / FACHB-805) (Anacystis nidulans R2).